A 382-amino-acid polypeptide reads, in one-letter code: Succinyl-diaminopimelate desuccinylase (382 aa).

Zn(2+) is bound at residue histidine 73. The active site involves aspartate 75. Aspartate 106 contacts Zn(2+). The active-site Proton acceptor is glutamate 140. Zn(2+) is bound by residues glutamate 141, glutamate 169, and histidine 355.

It belongs to the peptidase M20A family. DapE subfamily. Homodimer. Zn(2+) is required as a cofactor. Requires Co(2+) as cofactor.

The catalysed reaction is N-succinyl-(2S,6S)-2,6-diaminopimelate + H2O = (2S,6S)-2,6-diaminopimelate + succinate. The protein operates within amino-acid biosynthesis; L-lysine biosynthesis via DAP pathway; LL-2,6-diaminopimelate from (S)-tetrahydrodipicolinate (succinylase route): step 3/3. Its function is as follows. Catalyzes the hydrolysis of N-succinyl-L,L-diaminopimelic acid (SDAP), forming succinate and LL-2,6-diaminopimelate (DAP), an intermediate involved in the bacterial biosynthesis of lysine and meso-diaminopimelic acid, an essential component of bacterial cell walls. The protein is Succinyl-diaminopimelate desuccinylase of Saccharophagus degradans (strain 2-40 / ATCC 43961 / DSM 17024).